The chain runs to 197 residues: uncharacterized protein (197 aa).

The N-terminal stretch at 1-30 is a signal peptide; it reads MSTYIIINIALLIAIVALIFFLSKKTKSEA.

This is an uncharacterized protein from Acanthamoeba polyphaga (Amoeba).